A 292-amino-acid chain; its full sequence is Aquaporin-3 (292 aa).

Residues 1-24 lie on the Cytoplasmic side of the membrane; that stretch reads MGRQKELVSRCGEMLHIRYRLLRQ. The helical transmembrane segment at 25–42 threads the bilayer; it reads ALAECLGTLILVMFGCGS. At 43 to 56 the chain is on the extracellular side; the sequence is VAQVVLSRGTHGGF. A helical membrane pass occupies residues 57–74; that stretch reads LTINLAFGFAVTLGILIA. The Cytoplasmic segment spans residues 75 to 78; the sequence is GQVS. The segment at residues 79–92 is an intramembrane region (discontinuously helical); sequence GAHLNPAVTFAMCF. Positions 83–85 match the NPA 1 motif; the sequence is NPA. At 93 to 100 the chain is on the cytoplasmic side; it reads LAREPWIK. Residues 101 to 121 form a helical membrane-spanning segment; the sequence is LPIYTLAQTLGAFLGAGIVFG. Topologically, residues 122–159 are extracellular; that stretch reads LYYDAIWHFADNQLFVSGPNGTAGIFATYPSGHLDMIN. Asn141 is a glycosylation site (N-linked (GlcNAc...) asparagine). A helical transmembrane segment spans residues 160–177; it reads GFFDQFIGTASLIVCVLA. Residues 178-189 are Cytoplasmic-facing; the sequence is IVDPYNNPVPRG. A helical membrane pass occupies residues 190 to 206; sequence LEAFTVGLVVLVIGTSM. The Extracellular portion of the chain corresponds to 207–210; sequence GFNS. The segment at residues 211–224 is an intramembrane region (discontinuously helical); the sequence is GYAVNPARDFGPRL. Positions 215 to 217 match the NPA 2 motif; that stretch reads NPA. At 225–242 the chain is on the extracellular side; sequence FTALAGWGSAVFTTGQHW. The chain crosses the membrane as a helical span at residues 243–264; sequence WWVPIVSPLLGSIAGVFVYQLM. Residues 265 to 292 lie on the Cytoplasmic side of the membrane; it reads IGCHLEQPPPSNEEENVKLAHVKHKEQI.

The protein belongs to the MIP/aquaporin (TC 1.A.8) family. As to quaternary structure, homotetramer; each monomer provides an independent glycerol/water pore. Could also exist in other oligomeric states. Widely expressed in epithelial cells of kidney (collecting ducts) and airways, in keratinocytes, immature dendritic cells and erythrocytes. Isoform 2 is not detectable in erythrocytes at the protein level.

Its subcellular location is the cell membrane. The protein localises to the basolateral cell membrane. It catalyses the reaction glycerol(in) = glycerol(out). The enzyme catalyses H2O(in) = H2O(out). It carries out the reaction H2O2(out) = H2O2(in). The catalysed reaction is urea(in) = urea(out). With respect to regulation, glycerol transport is regulated by pH, with the porin being permeable to glycerol at pH 7.4 but not at pH 5.5. Water permeability, however, is not influenced by pH. Its function is as follows. Aquaglyceroporins form homotetrameric transmembrane channels, with each monomer independently mediating glycerol and water transport across the plasma membrane along their osmotic gradient. Could also be permeable to urea. Also participates in cell permeability to H2O2 and H2O2-mediated signaling. In skin, transports glycerol to the epidermis and stratum corneum, where it maintains hydration, elasticity, and supports lipid biosynthesis for barrier repair. In kidney, contributes to the reabsorption of water, helping the body maintain proper fluid balance. The protein is Aquaporin-3 of Homo sapiens (Human).